Consider the following 153-residue polypeptide: Melatonin receptor type 1A X2.0 (153 aa).

Residues 1–12 (HSSWYNRLFSNS) are Cytoplasmic-facing. The chain crosses the membrane as a helical span at residues 13 to 33 (GTICYVGLVWVLALGAILPNL). Over 34–57 (FVGSLRCDPRIFSCTFAQYVSSYY) the chain is Extracellular. Residues 58–78 (TIAVVIFHFFLPIGVVSYCYL) form a helical membrane-spanning segment. The Cytoplasmic portion of the chain corresponds to 79 to 112 (RIWVLVLNIRHRVKPDRHLHHQTWPYNIHGFITM). The helical transmembrane segment at 113–133 (FVVFVLFAVCWGPLNIIGLTV) threads the bilayer. Over 134-145 (AIYPPLGDSIPQ) the chain is Extracellular. Residues 146-153 (WLFVASYF) traverse the membrane as a helical segment.

This sequence belongs to the G-protein coupled receptor 1 family.

It localises to the cell membrane. Its function is as follows. High affinity receptor for melatonin. The activity of this receptor is mediated by pertussis toxin sensitive G proteins that inhibits adenylate cyclase activity. This chain is Melatonin receptor type 1A X2.0, found in Xenopus laevis (African clawed frog).